The sequence spans 77 residues: Exodeoxyribonuclease 7 small subunit (77 aa).

Belongs to the XseB family. Heterooligomer composed of large and small subunits.

It localises to the cytoplasm. The enzyme catalyses Exonucleolytic cleavage in either 5'- to 3'- or 3'- to 5'-direction to yield nucleoside 5'-phosphates.. Bidirectionally degrades single-stranded DNA into large acid-insoluble oligonucleotides, which are then degraded further into small acid-soluble oligonucleotides. This Clostridium acetobutylicum (strain ATCC 824 / DSM 792 / JCM 1419 / IAM 19013 / LMG 5710 / NBRC 13948 / NRRL B-527 / VKM B-1787 / 2291 / W) protein is Exodeoxyribonuclease 7 small subunit.